The sequence spans 494 residues: NAD(+) hydrolase ThsA (494 aa).

A Deacetylase sirtuin-type domain is found at 11 to 295 (ATDKEVLIKE…TILQRYCRSK (285 aa)). Ala-30, Asp-119, and His-157 together coordinate NAD(+). His-157 functions as the Proton acceptor in the catalytic mechanism. The interval 296 to 494 (ILISGSAVEY…KIITALRAGR (199 aa)) is SLOG (STALD) domain, binds 3'cADPR. 3'cADPR is bound by residues Gly-300, Ser-301, Leu-339, Phe-370, Arg-388, Lys-405, Gly-416, and Glu-420.

This sequence belongs to the soluble Thoeris ThsA family. Homotetramer.

The protein localises to the cytoplasm. It catalyses the reaction NAD(+) + H2O = ADP-D-ribose + nicotinamide + H(+). Probably activated by a signal molecule generated by endogenous ThsB1 and/or ThsB2. Can also be activated by the signal generated by ThsB of B.cereus. The activating molecule might be 3' cyclic ADP-D-ribose (3'cADPR). In terms of biological role, probable NAD(+) hydrolyzing component (NADase) of the Thoeris antiviral defense system, composed of ThsA, TIR1 (thsB1) and TIR2 (thsB2). Activated by a signal molecule generated by endogenous TIR1, TIR2 or ThsB from B.cereus. After activation it binds and hydrolyzes NAD(+), leading to cell death and inhibition of phage replication. Expression of Thoeris in B.subtilis (strain BEST7003) confers resistance to phages phi29, phi3T, SPBeta, SBSphi11, SBSphi13, SBSphiJ, SPO1 and SPR but not SBSphiC. The TIR paralogs confer overlapping resistance to different phages. This Cytobacillus dafuensis (Bacillus dafuensis) protein is NAD(+) hydrolase ThsA.